We begin with the raw amino-acid sequence, 2493 residues long: Adenylate cyclase (2493 aa).

Polar residues-rich tracts occupy residues 1-18 (MLFTMQFTTRSTVASPEQ), 42-51 (RDSNGSSNFT), 60-78 (SQQYDDTSTNSFHSSQPDI), 129-147 (PANSHSDSLPGPSTHSISP), and 197-210 (APFSSSHSNRTSVN). Disordered stretches follow at residues 1–85 (MLFT…SSTL), 99–148 (FEHA…ISPS), 197–325 (APFS…SSLS), 355–444 (NSPS…QSQS), 475–565 (GSIT…VNML), 616–660 (QAPV…KTSY), 753–832 (NVGE…GSKS), 854–882 (ALVQQQSQSQNHHQPSPNVRPTSRGGAGA), and 904–967 (RPSK…ATGT). Low complexity predominate over residues 211 to 233 (PSAASTASPSTSAATRTRPRGGT). 2 stretches are compositionally biased toward polar residues: residues 234-246 (NASQYNTLDTSFG) and 253-264 (LSSSRSQYSLRP). Composition is skewed to basic residues over residues 287 to 303 (AVKKTRNPFGFLKKKSS) and 404 to 422 (HLKKDPRKRIKGVRHHLAK). Residues 425–434 (KPGEDADSAR) are compositionally biased toward basic and acidic residues. The segment covering 500-525 (PSPSQTPIAERQTSVTSTVESPSHAS) has biased composition (polar residues). Residues 534-555 (SLRTPSRTTASTSTSSASTVLS) are compositionally biased toward low complexity. A compositionally biased stretch (basic and acidic residues) spans 630-640 (TDSELSDRKDS). Positions 641-660 (VVSTHSMRSNHSGISPKTSY) are enriched in polar residues. A compositionally biased stretch (acidic residues) spans 754–763 (VGEEEDDDDD). Composition is skewed to low complexity over residues 780-791 (SSSGISSTHASS) and 854-870 (ALVQQQSQSQNHHQPSP). Residues 913 to 935 (RPNTAGSVGATRPSTTTLGSTLS) are compositionally biased toward polar residues. The Ras-associating domain occupies 970 to 1072 (RNHFIRVYKT…LRFVFRPDSV (103 aa)). 22 LRR repeats span residues 1086–1107 (TFQHLDLHSRNLEMVPIFLYKH), 1110–1132 (WIVSLDLSGNPMSDLPLDFVQLC), 1134–1155 (SLRTLRLSNLALKRIPQSVRHS), 1157–1178 (TLTHLDVSNNRIVELAHVSLDL), 1181–1202 (ELMSLKVQNNRLFDLPSYFSSI), 1204–1225 (TLRNLNISNNRFEEFPKVICDV), 1227–1248 (SLVDLDVSFNSITELPAEIANL), 1250–1271 (NLERFILAGNELEKLPDSMSEL), 1273–1294 (SLRTIDLRRNKVQDVSSLLGLP), 1295–1316 (RLQNIQAESNNIKSFEATLGPQ), 1317–1336 (LTQVELGRNPLSKVRIAALT), 1339–1360 (DLTSLDLSSTNMTRLEEGLFPQ), 1363–1385 (ALVKLTLDGNQLVVLPDTLGDLK), 1386–1407 (RLEMLSCSNNLLATLPESIGDL), 1409–1430 (ALKELLVHNNNLKTLPQTLWLC), 1432–1453 (SLAHINLSSNLLESFPAVPDIR), 1511–1534 (SLQKLRLGDNRLGDDVFSVLSELT), 1535–1556 (SLEVLNLSFNEIFEIPDFSLQT), 1559–1580 (KLRELYISGNQLSTIPSDDLVV), 1583–1605 (ELRILHLNCNKLTTLPTELGKLK), 1606–1628 (KLANLDVGNNVLKYNIANWHYDW), and 1635–1654 (ELRYLNLSGNTRLEIKTKLS). Positions 1710-2000 (AYGIADALGK…ESIMVMVISV (291 aa)) constitute a PPM-type phosphatase domain. Positions 2058–2194 (ALVFTDIKNS…PMVNRAARIS (137 aa)) constitute a Guanylate cyclase domain. Mg(2+) is bound by residues D2063 and D2105. 3 disordered regions span residues 2220–2241 (DESSTAGGAGGEGENLEKTEEE), 2354–2378 (EADRSQPSTPLDDNGRNPIDGHGTA), and 2467–2493 (PPRASTSALSLPSPRTSPRNRLLELVP). Residues 2470–2485 (ASTSALSLPSPRTSPR) show a composition bias toward polar residues.

Belongs to the adenylyl cyclase class-3 family. The cofactor is Mg(2+).

It catalyses the reaction ATP = 3',5'-cyclic AMP + diphosphate. Functionally, plays essential roles in regulation of cellular metabolism by catalyzing the synthesis of a second messenger, cAMP. The sequence is that of Adenylate cyclase (UAC1) from Mycosarcoma maydis (Corn smut fungus).